Here is a 233-residue protein sequence, read N- to C-terminus: DNA repair protein RecO (233 aa).

This sequence belongs to the RecO family.

Involved in DNA repair and RecF pathway recombination. The protein is DNA repair protein RecO of Pseudomonas aeruginosa (strain UCBPP-PA14).